Reading from the N-terminus, the 152-residue chain is Actin-depolymerizing factor 2, isoform c (152 aa).

Positions 4–147 constitute an ADF-H domain; it reads GVKVDPSCKN…DEKSVKSDLM (144 aa).

This sequence belongs to the actin-binding proteins ADF family.

Functionally, depolymerizes growing actin filaments in muscle cells; required for the assembly of actin filaments into the functional contractile myofilament lattice of muscle. The sequence is that of Actin-depolymerizing factor 2, isoform c from Caenorhabditis elegans.